The sequence spans 762 residues: Multifunctional tryptophan biosynthesis protein (762 aa).

The Glutamine amidotransferase type-1 domain occupies 25-224 (NLILIDNYDS…LHMQGGTWAE (200 aa)). 76–78 (GPG) provides a ligand contact to L-glutamine. The active-site Nucleophile; for GATase activity is the Cys-104. Residues Gln-108 and 154-155 (SL) contribute to the L-glutamine site. Residues His-198 and Glu-200 each act as for GATase activity in the active site. An indole-3-glycerol phosphate synthase region spans residues 251–515 (ILQKIYAHRK…DATQFIRELC (265 aa)). Positions 531 to 762 (LVKICGTRSA…EFVKAAKSVR (232 aa)) are N-(5'-phosphoribosyl)anthranilate isomerase.

As to quaternary structure, tetramer of two components I and two components II.

The catalysed reaction is chorismate + L-glutamine = anthranilate + pyruvate + L-glutamate + H(+). It catalyses the reaction N-(5-phospho-beta-D-ribosyl)anthranilate = 1-(2-carboxyphenylamino)-1-deoxy-D-ribulose 5-phosphate. The enzyme catalyses 1-(2-carboxyphenylamino)-1-deoxy-D-ribulose 5-phosphate + H(+) = (1S,2R)-1-C-(indol-3-yl)glycerol 3-phosphate + CO2 + H2O. It participates in amino-acid biosynthesis; L-tryptophan biosynthesis; L-tryptophan from chorismate: step 1/5. It functions in the pathway amino-acid biosynthesis; L-tryptophan biosynthesis; L-tryptophan from chorismate: step 3/5. Its pathway is amino-acid biosynthesis; L-tryptophan biosynthesis; L-tryptophan from chorismate: step 4/5. Its function is as follows. Trifunctional enzyme bearing the Gln amidotransferase (GATase) domain of anthranilate synthase, indole-glycerolphosphate synthase, and phosphoribosylanthranilate isomerase activities. This chain is Multifunctional tryptophan biosynthesis protein (trp-1), found in Neurospora crassa (strain ATCC 24698 / 74-OR23-1A / CBS 708.71 / DSM 1257 / FGSC 987).